We begin with the raw amino-acid sequence, 574 residues long: Interleukin-22 receptor subunit alpha-1 (574 aa).

The first 15 residues, 1–15 (MRTLLTILTVGSLAA), serve as a signal peptide directing secretion. The Extracellular portion of the chain corresponds to 16-228 (HAPEDPSDLL…VKTLPDRTWT (213 aa)). 2 Fibronectin type-III domains span residues 17–124 (APED…LKPP) and 141–221 (PTPT…RVKT). A disulfide bridge connects residues Cys71 and Cys79. N-linked (GlcNAc...) asparagine glycosylation is found at Asn80 and Asn172. Cys128 and Cys217 are oxidised to a cystine. Residues 229–249 (YSFSGAFLFSMGFLVAVLCYL) form a helical membrane-spanning segment. Residues 250–574 (SYRYVTKPPA…GLALTVQWES (325 aa)) are Cytoplasmic-facing. Disordered stretches follow at residues 388 to 440 (SSYA…AGSC), 454 to 489 (AMEE…EGTP), and 507 to 560 (HPMS…TELD). Ser410 and Ser414 each carry phosphoserine.

This sequence belongs to the type II cytokine receptor family. Heterodimer with IL10RB and with IL20RB. IL22 binding to heterodimer is greater than binding to IL22RA1 alone. Interacts with FBXW12; the interaction promotes ubiquitination of IL22RA1. Post-translationally, ubiquitinated. As to expression, expressed in colon, liver, lung, pancreas and kidney. No expression in immune cells such as monocytes, T-cells, and NK-cells. Expressed in keratinocytes of normal skin as well as in psoriatic skin lesion. Detected in normal blood brain barrier endothelial cells as well as in multiple sclerosis lesions; Strongly expressed on central nervous system vessels within infiltrated multiple sclerosis lesions. Overexpressed in synovial fluid cells from rheumatoid arthritis and spondyloarthropathy patients.

Its subcellular location is the cell membrane. In terms of biological role, component of the receptor for IL20, IL22 and IL24. Component of IL22 receptor formed by IL22RA1 and IL10RB enabling IL22 signaling via JAK/STAT pathways. IL22 also induces activation of MAPK1/MAPK3 and Akt kinases pathways. Component of one of the receptor for IL20 and IL24 formed by IL22RA1 and IL20RB also signaling through STATs activation. Mediates IL24 antiangiogenic activity as well as IL24 inhibitory effect on endothelial cell tube formation and differentiation. In Homo sapiens (Human), this protein is Interleukin-22 receptor subunit alpha-1 (IL22RA1).